The primary structure comprises 121 residues: Large ribosomal subunit protein bL19 (121 aa).

It belongs to the bacterial ribosomal protein bL19 family.

Functionally, this protein is located at the 30S-50S ribosomal subunit interface and may play a role in the structure and function of the aminoacyl-tRNA binding site. The polypeptide is Large ribosomal subunit protein bL19 (Bifidobacterium adolescentis (strain ATCC 15703 / DSM 20083 / NCTC 11814 / E194a)).